The following is a 715-amino-acid chain: Gelsolin, cytoplasmic (715 aa).

The interval 1–124 (MTTELEIQKA…YLIGGVASGF (124 aa)) is actin-severing. The stretch at 24–75 (FELVPVPKTNHGKFYTGDSYIILKTTALESGRGFEWNLHYWQGKESSQDERG) is one Gelsolin-like 1 repeat. The tract at residues 72-75 (DERG) is actin-actin interfilament contact point. 136-145 (KVLTRVKGKR) contacts a 1,2-diacyl-sn-glycero-3-phospho-(1D-myo-inositol-4,5-bisphosphate). Gelsolin-like repeat units follow at residues 147–187 (VRAT…FEKN), 260–306 (LKIT…TERA), and 405–451 (LRKE…NERT). Residues 384–715 (AAESKMIDDG…FLGWDKTLWD (332 aa)) are actin-binding, Ca-sensitive. Ca(2+) contacts are provided by Gly421, Asp422, Glu449, Thr499, Asn539, Asp540, Glu562, Asp642, and Glu665. Gelsolin-like repeat units follow at residues 524 to 564 (CRAV…SEIQ) and 625 to 667 (FIAE…EEKM).

The protein belongs to the villin/gelsolin family. As to expression, predominantly in the body wall muscle, but expression is not restricted to muscle cells.

The protein resides in the cytoplasm. It is found in the cytoskeleton. Calcium-regulated, actin-modulating protein that binds to the plus (or barbed) ends of actin monomers or filaments, preventing monomer exchange (end-blocking or capping). It can promote the assembly of monomers into filaments (nucleation) as well as sever filaments already formed. In Halocynthia roretzi (Sea squirt), this protein is Gelsolin, cytoplasmic.